The following is a 312-amino-acid chain: Ribonuclease HIII (312 aa).

The RNase H type-2 domain occupies 95 to 312 (MSILGSDEVG…TEKAFRLLKK (218 aa)). A divalent metal cation-binding residues include Asp101, Glu102, and Asp206.

The protein belongs to the RNase HII family. RnhC subfamily. Requires Mn(2+) as cofactor. Mg(2+) is required as a cofactor.

The protein localises to the cytoplasm. It carries out the reaction Endonucleolytic cleavage to 5'-phosphomonoester.. Its function is as follows. Endonuclease that specifically degrades the RNA of RNA-DNA hybrids. The chain is Ribonuclease HIII from Bacillus mycoides (strain KBAB4) (Bacillus weihenstephanensis).